We begin with the raw amino-acid sequence, 303 residues long: UDP-3-O-acyl-N-acetylglucosamine deacetylase (303 aa).

Zn(2+)-binding residues include His-78, His-237, and Asp-241. Catalysis depends on His-264, which acts as the Proton donor.

This sequence belongs to the LpxC family. Requires Zn(2+) as cofactor.

It carries out the reaction a UDP-3-O-[(3R)-3-hydroxyacyl]-N-acetyl-alpha-D-glucosamine + H2O = a UDP-3-O-[(3R)-3-hydroxyacyl]-alpha-D-glucosamine + acetate. Its pathway is glycolipid biosynthesis; lipid IV(A) biosynthesis; lipid IV(A) from (3R)-3-hydroxytetradecanoyl-[acyl-carrier-protein] and UDP-N-acetyl-alpha-D-glucosamine: step 2/6. Its function is as follows. Catalyzes the hydrolysis of UDP-3-O-myristoyl-N-acetylglucosamine to form UDP-3-O-myristoylglucosamine and acetate, the committed step in lipid A biosynthesis. In Stenotrophomonas maltophilia (strain K279a), this protein is UDP-3-O-acyl-N-acetylglucosamine deacetylase.